A 448-amino-acid chain; its full sequence is Bifunctional protein GlmU (448 aa).

Residues 1–230 (MRSCLSIVLA…FDNIVGINNC (230 aa)) form a pyrophosphorylase region. Residues 9-12 (LAAG), Lys-23, Gln-76, and 81-82 (GT) each bind UDP-N-acetyl-alpha-D-glucosamine. Asp-106 is a Mg(2+) binding site. Residues Gly-142, Glu-156, Asn-171, and Asn-228 each coordinate UDP-N-acetyl-alpha-D-glucosamine. Asn-228 contributes to the Mg(2+) binding site. The tract at residues 231-251 (FELFEADSLWQKRKARDLMLS) is linker. Residues 252 to 448 (GVTILKPETV…VRLSGNQQKK (197 aa)) form an N-acetyltransferase region. UDP-N-acetyl-alpha-D-glucosamine is bound by residues Arg-317 and Lys-335. The active-site Proton acceptor is the His-347. Residues Tyr-350 and Asn-361 each coordinate UDP-N-acetyl-alpha-D-glucosamine. Residues Ala-364, 370 to 371 (NY), Ser-389, Ser-407, and Arg-424 each bind acetyl-CoA.

This sequence in the N-terminal section; belongs to the N-acetylglucosamine-1-phosphate uridyltransferase family. It in the C-terminal section; belongs to the transferase hexapeptide repeat family. In terms of assembly, homotrimer. Mg(2+) is required as a cofactor.

The protein localises to the cytoplasm. It catalyses the reaction alpha-D-glucosamine 1-phosphate + acetyl-CoA = N-acetyl-alpha-D-glucosamine 1-phosphate + CoA + H(+). The enzyme catalyses N-acetyl-alpha-D-glucosamine 1-phosphate + UTP + H(+) = UDP-N-acetyl-alpha-D-glucosamine + diphosphate. It functions in the pathway nucleotide-sugar biosynthesis; UDP-N-acetyl-alpha-D-glucosamine biosynthesis; N-acetyl-alpha-D-glucosamine 1-phosphate from alpha-D-glucosamine 6-phosphate (route II): step 2/2. Its pathway is nucleotide-sugar biosynthesis; UDP-N-acetyl-alpha-D-glucosamine biosynthesis; UDP-N-acetyl-alpha-D-glucosamine from N-acetyl-alpha-D-glucosamine 1-phosphate: step 1/1. It participates in bacterial outer membrane biogenesis; LPS lipid A biosynthesis. Its function is as follows. Catalyzes the last two sequential reactions in the de novo biosynthetic pathway for UDP-N-acetylglucosamine (UDP-GlcNAc). The C-terminal domain catalyzes the transfer of acetyl group from acetyl coenzyme A to glucosamine-1-phosphate (GlcN-1-P) to produce N-acetylglucosamine-1-phosphate (GlcNAc-1-P), which is converted into UDP-GlcNAc by the transfer of uridine 5-monophosphate (from uridine 5-triphosphate), a reaction catalyzed by the N-terminal domain. This Bartonella quintana (strain Toulouse) (Rochalimaea quintana) protein is Bifunctional protein GlmU.